Consider the following 458-residue polypeptide: Probable beta-eliminating lyase (458 aa).

N6-(pyridoxal phosphate)lysine is present on K257.

It belongs to the beta-eliminating lyase family. The cofactor is pyridoxal 5'-phosphate.

This Trichomonas vaginalis (strain ATCC PRA-98 / G3) protein is Probable beta-eliminating lyase.